The following is a 229-amino-acid chain: Urease accessory protein UreG (229 aa).

Residues 1-15 show a composition bias toward basic and acidic residues; that stretch reads MPPHFIDGEPHDHQH. Residues 1–20 are disordered; that stretch reads MPPHFIDGEPHDHQHDRPRR. 34 to 41 is a binding site for GTP; sequence GPVGSGKT.

Belongs to the SIMIBI class G3E GTPase family. UreG subfamily. Homodimer. UreD, UreF and UreG form a complex that acts as a GTP-hydrolysis-dependent molecular chaperone, activating the urease apoprotein by helping to assemble the nickel containing metallocenter of UreC. The UreE protein probably delivers the nickel.

The protein localises to the cytoplasm. Functionally, facilitates the functional incorporation of the urease nickel metallocenter. This process requires GTP hydrolysis, probably effectuated by UreG. In Rhodococcus jostii (strain RHA1), this protein is Urease accessory protein UreG.